Consider the following 358-residue polypeptide: Alanine racemase (358 aa).

Lys-35 acts as the Proton acceptor; specific for D-alanine in catalysis. An N6-(pyridoxal phosphate)lysine modification is found at Lys-35. Arg-130 contributes to the substrate binding site. Tyr-255 (proton acceptor; specific for L-alanine) is an active-site residue. A substrate-binding site is contributed by Met-303.

Belongs to the alanine racemase family. Requires pyridoxal 5'-phosphate as cofactor.

The enzyme catalyses L-alanine = D-alanine. It participates in amino-acid biosynthesis; D-alanine biosynthesis; D-alanine from L-alanine: step 1/1. Functionally, catalyzes the interconversion of L-alanine and D-alanine. May also act on other amino acids. The protein is Alanine racemase (alr) of Shewanella baltica (strain OS185).